A 289-amino-acid chain; its full sequence is MQTASLSVFPQYLLPKHALTLLAGRIANAEAGNLTTLLIRWFVWRYGVNMNEAINPDIRSYRTFNEFFTRPLLLENRPISDADYVCPADGVISQLGVISGDQIFQAKGHNYSAAALLGGDTRLAEKFYGGNFATLYLSPRDYHRVHMPVDARVSRMIYVPGDLFSVNAKTVRGVPGLFARNERVICIFESEFGPFALVLVGATIVGSVATVWHGVVNPRDSEGARDVQEWRYDSADLVLKKGDEMGRFQLGSTVVMLFPKNEIAFNPAWAPGRTIRFGETMATKADPAK.

Catalysis depends on charge relay system; for autoendoproteolytic cleavage activity residues aspartate 89, histidine 146, and serine 252. Residue serine 252 is the Schiff-base intermediate with substrate; via pyruvic acid; for decarboxylase activity of the active site. A Pyruvic acid (Ser); by autocatalysis modification is found at serine 252.

The protein belongs to the phosphatidylserine decarboxylase family. PSD-B subfamily. Prokaryotic type I sub-subfamily. In terms of assembly, heterodimer of a large membrane-associated beta subunit and a small pyruvoyl-containing alpha subunit. It depends on pyruvate as a cofactor. Is synthesized initially as an inactive proenzyme. Formation of the active enzyme involves a self-maturation process in which the active site pyruvoyl group is generated from an internal serine residue via an autocatalytic post-translational modification. Two non-identical subunits are generated from the proenzyme in this reaction, and the pyruvate is formed at the N-terminus of the alpha chain, which is derived from the carboxyl end of the proenzyme. The autoendoproteolytic cleavage occurs by a canonical serine protease mechanism, in which the side chain hydroxyl group of the serine supplies its oxygen atom to form the C-terminus of the beta chain, while the remainder of the serine residue undergoes an oxidative deamination to produce ammonia and the pyruvoyl prosthetic group on the alpha chain. During this reaction, the Ser that is part of the protease active site of the proenzyme becomes the pyruvoyl prosthetic group, which constitutes an essential element of the active site of the mature decarboxylase.

The protein resides in the cell membrane. The enzyme catalyses a 1,2-diacyl-sn-glycero-3-phospho-L-serine + H(+) = a 1,2-diacyl-sn-glycero-3-phosphoethanolamine + CO2. The protein operates within phospholipid metabolism; phosphatidylethanolamine biosynthesis; phosphatidylethanolamine from CDP-diacylglycerol: step 2/2. In terms of biological role, catalyzes the formation of phosphatidylethanolamine (PtdEtn) from phosphatidylserine (PtdSer). This chain is Phosphatidylserine decarboxylase proenzyme, found in Nitrosospira multiformis (strain ATCC 25196 / NCIMB 11849 / C 71).